A 548-amino-acid chain; its full sequence is ATP synthase subunit alpha (548 aa).

Residue 172–179 (GDRKTGKT) coordinates ATP. The tract at residues 511-548 (FETTSGESVVPDENVEAMSEDDVEKESVKVRKPAPKKK) is disordered. Positions 523 to 534 (ENVEAMSEDDVE) are enriched in acidic residues.

Belongs to the ATPase alpha/beta chains family. F-type ATPases have 2 components, CF(1) - the catalytic core - and CF(0) - the membrane proton channel. CF(1) has five subunits: alpha(3), beta(3), gamma(1), delta(1), epsilon(1). CF(0) has three main subunits: a(1), b(2) and c(9-12). The alpha and beta chains form an alternating ring which encloses part of the gamma chain. CF(1) is attached to CF(0) by a central stalk formed by the gamma and epsilon chains, while a peripheral stalk is formed by the delta and b chains.

It localises to the cell membrane. The enzyme catalyses ATP + H2O + 4 H(+)(in) = ADP + phosphate + 5 H(+)(out). Produces ATP from ADP in the presence of a proton gradient across the membrane. The alpha chain is a regulatory subunit. This Mycobacterium sp. (strain JLS) protein is ATP synthase subunit alpha.